The primary structure comprises 217 residues: Biotin transport regulator (217 aa).

Residues 14–49 form a disordered region; sequence GDGLGNLAGRSADPTGAADKGESGVPVPPTGFVDPT.

Its function is as follows. May be part of a system that R.meliloti uses to respond to plant (alfalfa) biotin signals. This Rhizobium meliloti (strain 1021) (Ensifer meliloti) protein is Biotin transport regulator (bioS).